Here is a 695-residue protein sequence, read N- to C-terminus: Threonine--tRNA ligase (695 aa).

Residues 1–76 (MPRIPSPPQA…TTTDVVEPVT (76 aa)) enclose the TGS domain. Positions 279–585 (DHRKLGVELD…LLEHHAGAFP (307 aa)) are catalytic. Positions 384, 435, and 562 each coordinate Zn(2+).

The protein belongs to the class-II aminoacyl-tRNA synthetase family. As to quaternary structure, homodimer. Zn(2+) is required as a cofactor.

The protein localises to the cytoplasm. The catalysed reaction is tRNA(Thr) + L-threonine + ATP = L-threonyl-tRNA(Thr) + AMP + diphosphate + H(+). Functionally, catalyzes the attachment of threonine to tRNA(Thr) in a two-step reaction: L-threonine is first activated by ATP to form Thr-AMP and then transferred to the acceptor end of tRNA(Thr). Also edits incorrectly charged L-seryl-tRNA(Thr). This Leifsonia xyli subsp. xyli (strain CTCB07) protein is Threonine--tRNA ligase.